We begin with the raw amino-acid sequence, 206 residues long: Outer-membrane lipoprotein carrier protein (206 aa).

Positions 1–21 (MKKLLCAVLLSPLLYSNAVLA) are cleaved as a signal peptide.

The protein belongs to the LolA family. As to quaternary structure, monomer.

The protein localises to the periplasm. Functionally, participates in the translocation of lipoproteins from the inner membrane to the outer membrane. Only forms a complex with a lipoprotein if the residue after the N-terminal Cys is not an aspartate (The Asp acts as a targeting signal to indicate that the lipoprotein should stay in the inner membrane). This chain is Outer-membrane lipoprotein carrier protein, found in Shewanella sp. (strain ANA-3).